A 156-amino-acid polypeptide reads, in one-letter code: Crossover junction endodeoxyribonuclease RuvC (156 aa).

Active-site residues include Asp-7, Glu-66, and Asp-138. Residues Asp-7, Glu-66, and Asp-138 each coordinate Mg(2+).

The protein belongs to the RuvC family. Homodimer which binds Holliday junction (HJ) DNA. The HJ becomes 2-fold symmetrical on binding to RuvC with unstacked arms; it has a different conformation from HJ DNA in complex with RuvA. In the full resolvosome a probable DNA-RuvA(4)-RuvB(12)-RuvC(2) complex forms which resolves the HJ. Requires Mg(2+) as cofactor.

The protein localises to the cytoplasm. It catalyses the reaction Endonucleolytic cleavage at a junction such as a reciprocal single-stranded crossover between two homologous DNA duplexes (Holliday junction).. Functionally, the RuvA-RuvB-RuvC complex processes Holliday junction (HJ) DNA during genetic recombination and DNA repair. Endonuclease that resolves HJ intermediates. Cleaves cruciform DNA by making single-stranded nicks across the HJ at symmetrical positions within the homologous arms, yielding a 5'-phosphate and a 3'-hydroxyl group; requires a central core of homology in the junction. The consensus cleavage sequence is 5'-(A/T)TT(C/G)-3'. Cleavage occurs on the 3'-side of the TT dinucleotide at the point of strand exchange. HJ branch migration catalyzed by RuvA-RuvB allows RuvC to scan DNA until it finds its consensus sequence, where it cleaves and resolves the cruciform DNA. The polypeptide is Crossover junction endodeoxyribonuclease RuvC (Ehrlichia canis (strain Jake)).